The primary structure comprises 203 residues: Guanylate kinase (203 aa).

The region spanning 3 to 181 (GTLYIVAAPS…AVSEMCAIFT (179 aa)) is the Guanylate kinase-like domain. Position 10–17 (10–17 (APSGAGKS)) interacts with ATP.

This sequence belongs to the guanylate kinase family.

It localises to the cytoplasm. It catalyses the reaction GMP + ATP = GDP + ADP. Its function is as follows. Essential for recycling GMP and indirectly, cGMP. This chain is Guanylate kinase, found in Xanthomonas axonopodis pv. citri (strain 306).